The sequence spans 609 residues: 2',5'-phosphodiesterase 12 (609 aa).

The N-terminal 42 residues, 1-42 (MWRLPGARAALRVIRTAVEKLSRAEAGSQTAAGAMERAVVRC), are a transit peptide targeting the mitochondrion. Residues 89–99 (AAAAKKSRKSR) show a composition bias toward basic residues. Disordered stretches follow at residues 89–111 (AAAA…CSGP) and 206–230 (AEPE…ETDV). 2 stretches are compositionally biased toward low complexity: residues 100-111 (PNASGGAACSGP) and 213-224 (PSSLSPSSPSSS). S217 carries the post-translational modification Phosphoserine. Mg(2+) is bound by residues E351, D496, and N498. D496 (proton donor/acceptor) is an active-site residue.

This sequence belongs to the CCR4/nocturin family. Mg(2+) serves as cofactor. As to expression, ubiquitous.

The protein localises to the mitochondrion matrix. The enzyme catalyses Exonucleolytic cleavage of poly(A) to 5'-AMP.. Enzyme that cleaves 2',5'-phosphodiester bond linking adenosines of the 5'-triphosphorylated oligoadenylates, triphosphorylated oligoadenylates referred as 2-5A modulates the 2-5A system. Degrades triphosphorylated 2-5A to produce AMP and ATP. Also cleaves 3',5'-phosphodiester bond of oligoadenylates. Plays a role as a negative regulator of the 2-5A system that is one of the major pathways for antiviral and antitumor functions induced by interferons (IFNs). Suppression of this enzyme increases cellular 2-5A levels and decreases viral replication in cultured small-airway epithelial cells and Hela cells. The sequence is that of 2',5'-phosphodiesterase 12 (PDE12) from Homo sapiens (Human).